The sequence spans 630 residues: ATP-dependent zinc metalloprotease FtsH (630 aa).

Residues M1 to N7 lie on the Cytoplasmic side of the membrane. The helical transmembrane segment at I8 to T28 threads the bilayer. The Periplasmic segment spans residues D29–W111. The chain crosses the membrane as a helical span at residues W112 to I132. Residues M133 to K630 lie on the Cytoplasmic side of the membrane. G203–T210 contacts ATP. Residue H425 coordinates Zn(2+). E426 is a catalytic residue. 2 residues coordinate Zn(2+): H429 and D501. The segment at K601 to K630 is disordered. The segment covering L608–E619 has biased composition (acidic residues). Over residues N620–K630 the composition is skewed to basic and acidic residues.

In the central section; belongs to the AAA ATPase family. The protein in the C-terminal section; belongs to the peptidase M41 family. As to quaternary structure, homohexamer. Requires Zn(2+) as cofactor.

Its subcellular location is the cell inner membrane. Functionally, acts as a processive, ATP-dependent zinc metallopeptidase for both cytoplasmic and membrane proteins. Plays a role in the quality control of integral membrane proteins. In Halothermothrix orenii (strain H 168 / OCM 544 / DSM 9562), this protein is ATP-dependent zinc metalloprotease FtsH.